A 311-amino-acid chain; its full sequence is Malate dehydrogenase (311 aa).

Residues 7-13 (GAAGGIG) and Asp-34 each bind NAD(+). The substrate site is built by Arg-81 and Arg-87. NAD(+) is bound by residues Asn-94 and 117 to 119 (ITN). Substrate contacts are provided by Asn-119 and Arg-153. His-177 (proton acceptor) is an active-site residue. Residue Met-227 participates in NAD(+) binding.

This sequence belongs to the LDH/MDH superfamily. MDH type 1 family. In terms of assembly, homodimer.

The enzyme catalyses (S)-malate + NAD(+) = oxaloacetate + NADH + H(+). In terms of biological role, catalyzes the reversible oxidation of malate to oxaloacetate. The polypeptide is Malate dehydrogenase (Aliivibrio fischeri (strain ATCC 700601 / ES114) (Vibrio fischeri)).